The sequence spans 629 residues: Translation initiation factor IF-2 (629 aa).

Positions 1–20 (MAKNIKTNKKPQQVNKKEMS) are disordered. Positions 127 to 297 (HRAPIVTIMG…LLIAEMQDYK (171 aa)) constitute a tr-type G domain. A G1 region spans residues 136-143 (GHVDHGKT). Residue 136-143 (GHVDHGKT) coordinates GTP. A G2 region spans residues 161 to 165 (GITQA). The G3 stretch occupies residues 183-186 (DTPG). GTP is bound by residues 183 to 187 (DTPGH) and 237 to 240 (NKCD). Positions 237 to 240 (NKCD) are G4. Residues 273–275 (SAK) are G5.

It belongs to the TRAFAC class translation factor GTPase superfamily. Classic translation factor GTPase family. IF-2 subfamily.

The protein localises to the cytoplasm. One of the essential components for the initiation of protein synthesis. Protects formylmethionyl-tRNA from spontaneous hydrolysis and promotes its binding to the 30S ribosomal subunits. Also involved in the hydrolysis of GTP during the formation of the 70S ribosomal complex. This Mesoplasma florum (strain ATCC 33453 / NBRC 100688 / NCTC 11704 / L1) (Acholeplasma florum) protein is Translation initiation factor IF-2.